Reading from the N-terminus, the 336-residue chain is Fructose-1,6-bisphosphatase class 1 (336 aa).

Positions 92, 115, 117, and 118 each coordinate Mg(2+). Substrate-binding positions include 118–121 (DGSS), asparagine 211, tyrosine 244, 262–264 (YLY), and lysine 274. Glutamate 280 serves as a coordination point for Mg(2+).

It belongs to the FBPase class 1 family. In terms of assembly, homotetramer. Mg(2+) is required as a cofactor.

It localises to the cytoplasm. It catalyses the reaction beta-D-fructose 1,6-bisphosphate + H2O = beta-D-fructose 6-phosphate + phosphate. Its pathway is carbohydrate biosynthesis; gluconeogenesis. The protein is Fructose-1,6-bisphosphatase class 1 of Hahella chejuensis (strain KCTC 2396).